A 434-amino-acid chain; its full sequence is N-acylneuraminate cytidylyltransferase (434 aa).

M1 is subject to N-acetylmethionine. The interval 1-42 (MDSVEKGAATSVSNPRGRPSRGRPPKLQRNSRGGQGRGVEKP) is disordered. A BC1 motif motif is present at residues 15–31 (PRGRPSRGRPPKLQRNS). Omega-N-methylarginine occurs at positions 37 and 52. Residues R52, N62, R111, S120, S122, and Q143 each contribute to the substrate site. A BC2 motif motif is present at residues 200-206 (KRPRRQD). R201 is an active-site residue. The BC3 motif motif lies at 269-276 (KEKLKEIK).

Belongs to the CMP-NeuNAc synthase family. In terms of assembly, homotetramer; the active enzyme is formed by a dimer of dimers. As to expression, ubiquitously expressed. Expressed in pancreas, kidney, liver, skeletal muscle, lung, placenta, brain, heart, colon, PBL, small intestine, ovary, testis, prostate, thymus and spleen.

Its subcellular location is the nucleus. The catalysed reaction is an N-acylneuraminate + CTP = a CMP-N-acyl-beta-neuraminate + diphosphate. It participates in amino-sugar metabolism; N-acetylneuraminate metabolism. In terms of biological role, catalyzes the activation of N-acetylneuraminic acid (NeuNAc) to cytidine 5'-monophosphate N-acetylneuraminic acid (CMP-NeuNAc), a substrate required for the addition of sialic acid. Has some activity toward NeuNAc, N-glycolylneuraminic acid (Neu5Gc) or 2-keto-3-deoxy-D-glycero-D-galacto-nononic acid (KDN). The protein is N-acylneuraminate cytidylyltransferase (CMAS) of Homo sapiens (Human).